Consider the following 260-residue polypeptide: Hydroxypyruvate/pyruvate aldolase Bphyt_0320 (260 aa).

Histidine 48 acts as the Proton acceptor in catalysis. Residues glutamate 157 and aspartate 183 each coordinate a divalent metal cation.

Belongs to the HpcH/HpaI aldolase family. Requires Mn(2+) as cofactor. The cofactor is Mg(2+). Co(2+) serves as cofactor.

The catalysed reaction is D-glyceraldehyde + 3-hydroxypyruvate = 2-dehydro-D-gluconate. It carries out the reaction D-glyceraldehyde + pyruvate = 2-dehydro-3-deoxy-L-galactonate. The enzyme catalyses 2-dehydro-3-deoxy-D-gluconate = D-glyceraldehyde + pyruvate. Functionally, aldolase which can catalyze in vitro the aldolisation reaction between hydroxypyruvate (HPA) or pyruvate (PA) and D-glyceraldehyde (D-GA). The condensation of hydroxypyruvate and D-glyceraldehyde produces 2-dehydro-D-gluconate. The condensation of pyruvate and D-glyceraldehyde produces 2-dehydro-3-deoxy-L-galactonate as the major product and 2-dehydro-3-deoxy-D-gluconate. Also catalyzes the retro-aldol type decarboxylation of oxaloacetate, a general property of known pyruvate aldolases. The chain is Hydroxypyruvate/pyruvate aldolase Bphyt_0320 from Paraburkholderia phytofirmans (strain DSM 17436 / LMG 22146 / PsJN) (Burkholderia phytofirmans).